The following is a 1384-amino-acid chain: DNA-directed RNA polymerase subunit beta (1384 aa).

Belongs to the RNA polymerase beta chain family. In terms of assembly, the RNAP catalytic core consists of 2 alpha, 1 beta, 1 beta' and 1 omega subunit. When a sigma factor is associated with the core the holoenzyme is formed, which can initiate transcription.

The catalysed reaction is RNA(n) + a ribonucleoside 5'-triphosphate = RNA(n+1) + diphosphate. Its function is as follows. DNA-dependent RNA polymerase catalyzes the transcription of DNA into RNA using the four ribonucleoside triphosphates as substrates. This is DNA-directed RNA polymerase subunit beta from Stenotrophomonas maltophilia (strain R551-3).